We begin with the raw amino-acid sequence, 227 residues long: Uracil-DNA glycosylase (227 aa).

Asp-65 acts as the Proton acceptor in catalysis.

It belongs to the uracil-DNA glycosylase (UDG) superfamily. UNG family.

It is found in the cytoplasm. The enzyme catalyses Hydrolyzes single-stranded DNA or mismatched double-stranded DNA and polynucleotides, releasing free uracil.. Its function is as follows. Excises uracil residues from the DNA which can arise as a result of misincorporation of dUMP residues by DNA polymerase or due to deamination of cytosine. The chain is Uracil-DNA glycosylase from Bacillus velezensis (strain DSM 23117 / BGSC 10A6 / LMG 26770 / FZB42) (Bacillus amyloliquefaciens subsp. plantarum).